The primary structure comprises 321 residues: AA9 family lytic polysaccharide monooxygenase A (321 aa).

The first 21 residues, 1-21 (MFRAQSFLPVLALVLRVAAHG), serve as a signal peptide directing secretion. Histidine 20 is a Cu(2+) binding site. Cysteine 71 and cysteine 197 are disulfide-bonded. Asparagine 72 carries an N-linked (GlcNAc...) asparagine glycan. Histidine 105 is a Cu(2+) binding site. A glycan (N-linked (GlcNAc...) asparagine) is linked at asparagine 157. Positions 183 and 192 each coordinate O2. Residue tyrosine 194 coordinates Cu(2+). Residues 278–306 (SSSAAATQSSSAAPSSSAIGTSTASSAAA) form a disordered region. The GPI-anchor amidated serine moiety is linked to residue serine 293. The propeptide at 294-321 (SAIGTSTASSAAASGTAIVDANTCMNSA) is removed in mature form.

Belongs to the polysaccharide monooxygenase AA9 family. The cofactor is Cu(2+).

Its subcellular location is the cell membrane. The enzyme catalyses [(1-&gt;4)-beta-D-glucosyl]n+m + reduced acceptor + O2 = 4-dehydro-beta-D-glucosyl-[(1-&gt;4)-beta-D-glucosyl]n-1 + [(1-&gt;4)-beta-D-glucosyl]m + acceptor + H2O.. In terms of biological role, lytic polysaccharide monooxygenase (LPMO) that depolymerizes crystalline and amorphous polysaccharides via the oxidation of scissile alpha- or beta-(1-4)-glycosidic bonds, yielding C1 or C4 oxidation products. Catalysis by LPMOs requires the reduction of the active-site copper from Cu(II) to Cu(I) by a reducing agent and H(2)O(2) or O(2) as a cosubstrate. Has broad specificity, cleaving at any position along the beta-glucan backbone of xyloglucan, regardless of substitutions. Shows minor activity on glucomannan. The polypeptide is AA9 family lytic polysaccharide monooxygenase A (Gloeophyllum trabeum (strain ATCC 11539 / FP-39264 / Madison 617) (Brown rot fungus)).